A 341-amino-acid chain; its full sequence is L-threonine 3-dehydrogenase (341 aa).

Cys-38 contacts Zn(2+). Residues Thr-40 and His-43 each act as charge relay system in the active site. Zn(2+)-binding residues include His-63, Glu-64, Cys-93, Cys-96, Cys-99, and Cys-107. NAD(+)-binding positions include Ile-175, Asp-195, Arg-200, 262–264, and 286–287; these read LGI and IY.

The protein belongs to the zinc-containing alcohol dehydrogenase family. In terms of assembly, homotetramer. Requires Zn(2+) as cofactor.

Its subcellular location is the cytoplasm. It catalyses the reaction L-threonine + NAD(+) = (2S)-2-amino-3-oxobutanoate + NADH + H(+). The protein operates within amino-acid degradation; L-threonine degradation via oxydo-reductase pathway; glycine from L-threonine: step 1/2. Its function is as follows. Catalyzes the NAD(+)-dependent oxidation of L-threonine to 2-amino-3-ketobutyrate. The protein is L-threonine 3-dehydrogenase of Shewanella woodyi (strain ATCC 51908 / MS32).